The chain runs to 37 residues: NADH dehydrogenase [ubiquinone] 1 alpha subcomplex subunit 5 (37 aa).

The protein belongs to the complex I NDUFA5 subunit family. As to quaternary structure, complex I is composed of about 45 different subunits.

Its subcellular location is the mitochondrion inner membrane. Functionally, accessory subunit of the mitochondrial membrane respiratory chain NADH dehydrogenase (Complex I), that is believed not to be involved in catalysis. Complex I functions in the transfer of electrons from NADH to the respiratory chain. The immediate electron acceptor for the enzyme is believed to be ubiquinone. The polypeptide is NADH dehydrogenase [ubiquinone] 1 alpha subcomplex subunit 5 (Solanum tuberosum (Potato)).